Consider the following 270-residue polypeptide: Urease accessory protein UreD (270 aa).

The protein belongs to the UreD family. UreD, UreF and UreG form a complex that acts as a GTP-hydrolysis-dependent molecular chaperone, activating the urease apoprotein by helping to assemble the nickel containing metallocenter of UreC. The UreE protein probably delivers the nickel.

It localises to the cytoplasm. Functionally, required for maturation of urease via the functional incorporation of the urease nickel metallocenter. This is Urease accessory protein UreD from Microcystis aeruginosa (strain NIES-843 / IAM M-2473).